A 110-amino-acid polypeptide reads, in one-letter code: Nucleotide-binding protein in fmt 3'region (110 aa).

ATP is bound at residue 8 to 15 (GLSGAGKT). GTP is bound at residue 57 to 60 (DARA).

Belongs to the RapZ-like family.

Functionally, displays ATPase and GTPase activities. This is Nucleotide-binding protein in fmt 3'region from Thermus thermophilus.